We begin with the raw amino-acid sequence, 185 residues long: Elongation factor P (185 aa).

This sequence belongs to the elongation factor P family.

Its subcellular location is the cytoplasm. It participates in protein biosynthesis; polypeptide chain elongation. In terms of biological role, involved in peptide bond synthesis. Stimulates efficient translation and peptide-bond synthesis on native or reconstituted 70S ribosomes in vitro. Probably functions indirectly by altering the affinity of the ribosome for aminoacyl-tRNA, thus increasing their reactivity as acceptors for peptidyl transferase. The polypeptide is Elongation factor P (Bacillus mycoides (strain KBAB4) (Bacillus weihenstephanensis)).